Here is a 263-residue protein sequence, read N- to C-terminus: MFQFELKKWIQKLNSTLSLFVSLLARLRTMKINTSSLAEQIYLVGPGSLNITLLTACFISMVFTMQIAKEFLHLDAASALGAVIVIAFTRELSPVLTAVIIAGKIGSSFTAEIATMETTEQIDALYLLNTNPIDYLVFPKVAACCIMLPILSTISLTASIAISIFVSFVMYGIPSSIFLKSAFLALSVSDFFSCLQKSLCFGTIIAFISCQWGLTSSGGAKGVGNSTTSSVVTILLTIFITDFILSYFMFQSTGSSIAQGNNL.

The next 6 membrane-spanning stretches (helical) occupy residues 43–63, 82–102, 136–156, 159–179, 199–219, and 230–250; these read LVGP…SMVF, AVIV…VIIA, LVFP…TISL, SIAI…SIFL, LCFG…SSGG, and SVVT…YFMF.

This sequence belongs to the MlaE permease family.

It is found in the plastid. The protein resides in the chloroplast membrane. Could be part of an ABC transporter complex. The protein is Probable ABC transporter permease protein ycf63 (ycf63) of Porphyra purpurea (Red seaweed).